We begin with the raw amino-acid sequence, 218 residues long: Riboflavin synthase (218 aa).

Lumazine-binding repeat units follow at residues 1–97 (MFTG…LGGH) and 98–194 (LVSG…EKLI). 2,4-dihydroxypteridine-binding positions include 4-6 (GII), 48-50 (CLT), 62-67 (DLSLET), 101-103 (GHV), K136, 145-147 (SLT), and 159-164 (TIVPHT).

As to quaternary structure, homotrimer.

It carries out the reaction 2 6,7-dimethyl-8-(1-D-ribityl)lumazine + H(+) = 5-amino-6-(D-ribitylamino)uracil + riboflavin. Its pathway is cofactor biosynthesis; riboflavin biosynthesis; riboflavin from 2-hydroxy-3-oxobutyl phosphate and 5-amino-6-(D-ribitylamino)uracil: step 2/2. Catalyzes the dismutation of two molecules of 6,7-dimethyl-8-ribityllumazine, resulting in the formation of riboflavin and 5-amino-6-(D-ribitylamino)uracil. The protein is Riboflavin synthase (ribE) of Photobacterium leiognathi.